We begin with the raw amino-acid sequence, 126 residues long: Methylglyoxal synthase (126 aa).

The MGS-like domain occupies methionine 1–alanine 126. Substrate-binding positions include histidine 12, lysine 16, threonine 38–threonine 41, and serine 59–glycine 60. Aspartate 65 acts as the Proton donor/acceptor in catalysis. Residue histidine 92 coordinates substrate.

It belongs to the methylglyoxal synthase family.

It catalyses the reaction dihydroxyacetone phosphate = methylglyoxal + phosphate. In terms of biological role, catalyzes the formation of methylglyoxal from dihydroxyacetone phosphate. This is Methylglyoxal synthase from Rhizobium etli (strain ATCC 51251 / DSM 11541 / JCM 21823 / NBRC 15573 / CFN 42).